We begin with the raw amino-acid sequence, 127 residues long: Major sperm protein 78 (127 aa).

Alanine 2 carries the post-translational modification N-acetylalanine. The MSP domain occupies 9–126 (DIQTQPGTKI…RRKNLPIEYN (118 aa)).

As to expression, sperm.

The protein localises to the cell projection. It localises to the pseudopodium. Its subcellular location is the cytoplasm. It is found in the cytoskeleton. Functionally, central component in molecular interactions underlying sperm crawling. Forms an extensive filament system that extends from sperm villipoda, along the leading edge of the pseudopod. The chain is Major sperm protein 78 (msp-78) from Caenorhabditis elegans.